The sequence spans 903 residues: Calcium-activated chloride channel regulator 1 (903 aa).

The N-terminal stretch at 1–21 is a signal peptide; that stretch reads MVPRLTVILFLTLHLLPGMKS. The segment at 45-199 is metalloprotease domain; the sequence is DEKLIQNIKE…HITGTNVIVK (155 aa). His155 lines the Zn(2+) pocket. Residue Glu156 is part of the active site. The Zn(2+) site is built by His159 and Asp166. One can recognise a VWFA domain in the interval 308–476; that stretch reads VVCLVLDKSG…NGLTNAFSRI (169 aa). Asn360, Asn372, Asn504, and Asn842 each carry an N-linked (GlcNAc...) asparagine glycan. A helical transmembrane segment spans residues 883 to 903; sequence GTKISAINLAIFALAMILSIV.

It belongs to the CLCR family. In terms of processing, glycosylated. Post-translationally, the 125-kDa product is autoproteolytically processed by the metalloprotease domain and yields to two cell-surface-associated subunits, a 90-kDa protein and a group of 37- to 41-kDa proteins. The cleavage is necessary for calcium-activated chloride channel (CaCC) activation activity. In terms of tissue distribution, trachea.

The protein localises to the apical cell membrane. In terms of biological role, may be involved in mediating calcium-activated chloride conductance. May play critical roles in goblet cell metaplasia, mucus hypersecretion, cystic fibrosis and AHR. May be involved in the regulation of mucus production and/or secretion by goblet cells. Involved in the regulation of tissue inflammation in the innate immune response. May play a role as a tumor suppressor. Induces MUC5AC. The polypeptide is Calcium-activated chloride channel regulator 1 (Bos taurus (Bovine)).